The sequence spans 451 residues: Zinc finger MYND domain-containing protein 10 homolog (451 aa).

C412, C415, C423, C426, C432, C436, H444, and C448 together coordinate Zn(2+). Residues C412 to C448 form an MYND-type zinc finger.

This sequence belongs to the ZMYND10 family. Specifically expressed in cells with flagella and motile cilia: chordotonal sensory neurons and sperm.

Its subcellular location is the cytoplasm. The protein localises to the cell projection. The protein resides in the cilium. It localises to the dynein axonemal particle. Functionally, plays a role in axonemal structure organization and motility. May be involved in axonemal pre-assembly of inner and outer dynein arms (IDA and ODA, respectively) for proper axoneme building for cilia motility. This is Zinc finger MYND domain-containing protein 10 homolog from Drosophila melanogaster (Fruit fly).